The chain runs to 231 residues: Flagellar L-ring protein (231 aa).

The signal sequence occupies residues 1–18 (MNRLMIVSLLGIATALGG). Residue Cys19 is the site of N-palmitoyl cysteine attachment. The S-diacylglycerol cysteine moiety is linked to residue Cys19. The segment at 118 to 141 (LSLSAEYGGSRDAKGDSQAGQSNS) is disordered.

It belongs to the FlgH family. The basal body constitutes a major portion of the flagellar organelle and consists of four rings (L,P,S, and M) mounted on a central rod.

The protein resides in the cell outer membrane. The protein localises to the bacterial flagellum basal body. In terms of biological role, assembles around the rod to form the L-ring and probably protects the motor/basal body from shearing forces during rotation. This Pseudomonas aeruginosa (strain UCBPP-PA14) protein is Flagellar L-ring protein.